Consider the following 184-residue polypeptide: Oligoribonuclease (184 aa).

Residues 10-172 (LVWVDCEMTG…ADVLESIAEL (163 aa)) form the Exonuclease domain. Residue Tyr-129 is part of the active site.

The protein belongs to the oligoribonuclease family.

The protein localises to the cytoplasm. 3'-to-5' exoribonuclease specific for small oligoribonucleotides. The sequence is that of Oligoribonuclease from Tropheryma whipplei (strain Twist) (Whipple's bacillus).